We begin with the raw amino-acid sequence, 101 residues long: Small ribosomal subunit protein uS14 (101 aa).

The protein belongs to the universal ribosomal protein uS14 family. In terms of assembly, part of the 30S ribosomal subunit. Contacts proteins S3 and S10.

Binds 16S rRNA, required for the assembly of 30S particles and may also be responsible for determining the conformation of the 16S rRNA at the A site. The sequence is that of Small ribosomal subunit protein uS14 from Caulobacter vibrioides (strain ATCC 19089 / CIP 103742 / CB 15) (Caulobacter crescentus).